The sequence spans 148 residues: Low molecular weight protein-tyrosine-phosphatase Etp (148 aa).

Cys-13 acts as the Nucleophile in catalysis. Arg-19 is a catalytic residue. The Proton donor role is filled by Asp-119.

This sequence belongs to the low molecular weight phosphotyrosine protein phosphatase family.

It carries out the reaction O-phospho-L-tyrosyl-[protein] + H2O = L-tyrosyl-[protein] + phosphate. In terms of biological role, dephosphorylates etk. In Escherichia coli O157:H7, this protein is Low molecular weight protein-tyrosine-phosphatase Etp (etp).